Reading from the N-terminus, the 552-residue chain is MKALFRACRIGKVMLRYRLDTLLDGTAVERWLRLAKPFVPRISAEIVEQSRGRRLRLALQELGPIFVKFGQILSTRRDLVPQDIGDELVMLQDRVEPFEGQTARSIIETALGKSVESAFAHFDTVPLASASISQVHAATLHDRRAVVVKVLRPDIEHQISDDIALLKSLATLVEHTHPNADKIRPREIVAEIETTLAAELDLQREGANASVLRRFWEASDDIYVPEVIWSHTAERVLTLERMYGIPSDDIALLDASGIDRKALSSKGIRVFYTQVFRDNFFHADAHSGNIWVDSDPARKSNPRFIVLDFGIMGQLSQKDQYYLAENFMAIFHKDYRRIAELHVEAGWIPPHVRIEELEAAARSVCEPYFTRPLSQISLAEVMMKLFHVARRYQLTLQPQLILLQKTLLNIEGVGRQLDPELDIWVVARPVLERILRARYSPRHALKELNKRLPEIMTHAPDTPRLIHTWLVQQVESRKQNDVYLQQIRALAMTLQGLQRRVVNAIVGSGLLVAAAVLYGLHPDGLYLGTIPVWSLISGCIGALALFSAWWRS.

Residues 121–504 (HFDTVPLASA…QGLQRRVVNA (384 aa)) form the Protein kinase domain. ATP-binding positions include 127–135 (LASASISQV) and lysine 149. Aspartate 284 functions as the Proton acceptor in the catalytic mechanism. The next 2 membrane-spanning stretches (helical) occupy residues 501 to 521 (VVNA…YGLH) and 530 to 550 (IPVW…SAWW).

It belongs to the ABC1 family. UbiB subfamily.

It is found in the cell inner membrane. The protein operates within cofactor biosynthesis; ubiquinone biosynthesis [regulation]. Is probably a protein kinase regulator of UbiI activity which is involved in aerobic coenzyme Q (ubiquinone) biosynthesis. The sequence is that of Probable protein kinase UbiB from Xylella fastidiosa (strain M23).